A 124-amino-acid chain; its full sequence is SGPWMCYPGQAFQVPALPGCRPLLKLQCNGSQVPEAVLRDCCQQLADISEWPRCGALYSMLDSMYKEHGVSEGQAGTGAFPSCRREVVKLTAASITAVCRLPIVVDASGDGAYVCKDVAAYPDA.

4 disulfides stabilise this stretch: Cys-20–Cys-41, Cys-28–Cys-83, Cys-42–Cys-99, and Cys-54–Cys-115.

This sequence belongs to the protease inhibitor I6 (cereal trypsin/alpha-amylase inhibitor) family. In terms of assembly, homodimer. Post-translationally, the disulfide bonds are essential for the inhibitor activity. In terms of tissue distribution, endosperm.

The protein localises to the secreted. Its function is as follows. Alpha-amylase inhibitor. This Triticum aestivum (Wheat) protein is Alpha-amylase inhibitor 0.53.